The following is a 475-amino-acid chain: NADH-quinone oxidoreductase subunit N (475 aa).

A run of 14 helical transmembrane segments spans residues 7 to 27 (ISIA…VLLG), 40 to 60 (LLGA…SAVD), 74 to 94 (FIAI…LVAG), 105 to 125 (FEYT…LSAN), 127 to 147 (LMTL…LAAF), 161 to 181 (YFVL…LVYG), 191 to 211 (IAAA…LMAL), 242 to 262 (APKL…FGVY), 266 to 286 (WMLI…FGGL), 295 to 315 (LAYS…AGEV), 321 to 341 (VLTY…IVLA), 365 to 385 (LAVA…MAGF), 399 to 419 (ELYW…GYYL), and 448 to 468 (GATI…TGII).

This sequence belongs to the complex I subunit 2 family. As to quaternary structure, NDH-1 is composed of 14 different subunits. Subunits NuoA, H, J, K, L, M, N constitute the membrane sector of the complex.

It localises to the cell inner membrane. The catalysed reaction is a quinone + NADH + 5 H(+)(in) = a quinol + NAD(+) + 4 H(+)(out). Functionally, NDH-1 shuttles electrons from NADH, via FMN and iron-sulfur (Fe-S) centers, to quinones in the respiratory chain. The immediate electron acceptor for the enzyme in this species is believed to be ubiquinone. Couples the redox reaction to proton translocation (for every two electrons transferred, four hydrogen ions are translocated across the cytoplasmic membrane), and thus conserves the redox energy in a proton gradient. This chain is NADH-quinone oxidoreductase subunit N, found in Hirschia baltica (strain ATCC 49814 / DSM 5838 / IFAM 1418).